A 376-amino-acid polypeptide reads, in one-letter code: Palmitoyl-[acyl-carrier-protein] 4-desaturase 2, chloroplastic (376 aa).

The N-terminal 33 residues, 1–33 (MELHLALRASPLPAADPGRRPPPPRGNFATNCT), are a transit peptide targeting the chloroplast. Positions 114, 149, 152, 202, 235, and 238 each coordinate Fe cation.

This sequence belongs to the fatty acid desaturase type 2 family. As to quaternary structure, homodimer. The cofactor is Fe(2+). In terms of tissue distribution, preferentially expressed in the flower labellum.

The protein localises to the plastid. It localises to the chloroplast stroma. The enzyme catalyses hexadecanoyl-[ACP] + 2 reduced [2Fe-2S]-[ferredoxin] + O2 + 2 H(+) = (4Z)-hexadecenoyl-[ACP] + 2 oxidized [2Fe-2S]-[ferredoxin] + 2 H2O. It carries out the reaction octadecanoyl-[ACP] + 2 reduced [2Fe-2S]-[ferredoxin] + O2 + 2 H(+) = (9Z)-octadecenoyl-[ACP] + 2 oxidized [2Fe-2S]-[ferredoxin] + 2 H2O. Its pathway is lipid metabolism; fatty acid metabolism. Converts stearoyl-ACP to oleoyl-ACP by introduction of a cis double bond between carbons 9 and 10 of the acyl chain. Converts palmitoyl-ACP to (4Z)-hexadec-4-enoyl-ACP by introduction of a cis double bond between carbons 4 and 5 of the acyl chain. Catalyzes the desaturation of saturated fatty acid 18:0 and 16:0 to generate 18:1 (delta-9) and 16:1 (delta-4) intermediates, expected to give rise to 9-alkenes and 12-alkenes, respectively. The polypeptide is Palmitoyl-[acyl-carrier-protein] 4-desaturase 2, chloroplastic (SAD2) (Ophrys arachnitiformis subsp. archipelagi (Orchid)).